The following is a 132-amino-acid chain: Small ribosomal subunit protein uS8 (132 aa).

The protein belongs to the universal ribosomal protein uS8 family. In terms of assembly, part of the 30S ribosomal subunit. Contacts proteins S5 and S12.

Functionally, one of the primary rRNA binding proteins, it binds directly to 16S rRNA central domain where it helps coordinate assembly of the platform of the 30S subunit. The polypeptide is Small ribosomal subunit protein uS8 (Pseudarthrobacter chlorophenolicus (strain ATCC 700700 / DSM 12829 / CIP 107037 / JCM 12360 / KCTC 9906 / NCIMB 13794 / A6) (Arthrobacter chlorophenolicus)).